A 422-amino-acid polypeptide reads, in one-letter code: Glutamyl-tRNA reductase (422 aa).

Residues 49 to 52, Ser107, 112 to 114, and Gln118 contribute to the substrate site; these read TCNR and EPQ. The active-site Nucleophile is the Cys50. An NADP(+)-binding site is contributed by 187-192; that stretch reads GAGETI.

It belongs to the glutamyl-tRNA reductase family. In terms of assembly, homodimer.

It catalyses the reaction (S)-4-amino-5-oxopentanoate + tRNA(Glu) + NADP(+) = L-glutamyl-tRNA(Glu) + NADPH + H(+). Its pathway is porphyrin-containing compound metabolism; protoporphyrin-IX biosynthesis; 5-aminolevulinate from L-glutamyl-tRNA(Glu): step 1/2. Functionally, catalyzes the NADPH-dependent reduction of glutamyl-tRNA(Glu) to glutamate 1-semialdehyde (GSA). The polypeptide is Glutamyl-tRNA reductase (Stutzerimonas stutzeri (strain A1501) (Pseudomonas stutzeri)).